A 541-amino-acid chain; its full sequence is Periplasmic oligopeptide-binding protein OppA (541 aa).

The signal sequence occupies residues 1-20; that stretch reads MQHKLLFSAIALALSYSAQA.

Belongs to the bacterial solute-binding protein 5 family. The complex is composed of two ATP-binding proteins (OppD and OppF), two transmembrane proteins (OppB and OppC) and a solute-binding protein (OppA).

It is found in the periplasm. Its function is as follows. Part of the ABC transporter complex OppABCDF involved in the uptake of oligopeptides. Plays an important nutritional role. Binds peptides containing from two to five amino acid residues. The sequence is that of Periplasmic oligopeptide-binding protein OppA (oppA) from Haemophilus influenzae (strain ATCC 51907 / DSM 11121 / KW20 / Rd).